The chain runs to 92 residues: PqqA binding protein (92 aa).

The protein belongs to the PqqD family. As to quaternary structure, monomer. Interacts with PqqE.

Its pathway is cofactor biosynthesis; pyrroloquinoline quinone biosynthesis. In terms of biological role, functions as a PqqA binding protein and presents PqqA to PqqE, in the pyrroloquinoline quinone (PQQ) biosynthetic pathway. In Pseudomonas paraeruginosa (strain DSM 24068 / PA7) (Pseudomonas aeruginosa (strain PA7)), this protein is PqqA binding protein.